Consider the following 976-residue polypeptide: MDHEGCQGQHPQQCCQWVSNAWSEFLDLLKNAETLDIVIMLLGYIAMHLTFVSLFLSMRKMGSKFWLGICTLFSSVFAFLFGLVVTTKLGVPISVILLSEGLPFLVVTIGFEKNIVLTRAVMSHAIEHRRIQAQNSKSGKRSPDGSTQNMIQYAVQAAIKEKGFEIIRDYAIEIVILVIGAASGVQGGLQQFCFLAAWTLFFDFILLFTFYTAILSIKLRSTVSSVMSICVWPLRMMASRRVAENVAKGDDELNRVRGDAPLFGRKSSSIPKFKVLMILGFIFVNIVNICSIPFRNPSSMSTIRTWASSLGGVIAPLSVDPFKVASNGLDAILPTAKSNNRPTLVTVLTPIKYELEYPSIHYALGSAASNPAYNDAFHHHFQGYGVGGRMVGGILKSLEDPVLSKWIVIALALSVALNGYLFNVARWGIKDPNVPEHNIDRNELARAREFNDTGSATLPLGEYVPPTPMRTQPSTPAITDDEAEGLHMTKARPANLPNRSNEELEKLLSENALREMTDEEVISLSMRGKIPGYALEKTLGDFTRAVKIRRSIIARNKAAADITHSLDRSKLPYENYNWERFFGACCENVIGYMPLPVGVAGPLVIDGQSYFIPMATTEGVLVASASRGCKAINSGGGAITVLTADGMTRGPCVAFETLERAGAAKLWLDSEAGQDMMKKAFNSTSRFARLQSMKTALAGTNLYIRFKTTTGDAMGMNMISKGVEHALSVMANDGGFDDMQIISVSGNYCTDKKAAALNWIDGRGKGVVAEAIIPGEVVRSVLKSDVDSLVELNVAKNLIGSAMAGSVGGFNAHAANIVAAIFLATGQDPAQVVESANCITIMKNLNGALQISVSMPSLEVGTLGGGTILEPQGAMLDILGVRGSHPTNPGDNARRLARIIGAAVLAGELSLCSALAAGHLVRAHMQHNRSAAPSRSTTPGSSHDARLTGHDQCPRALSVNNVDERRRYSEVKAIDE.

Residues 1–36 (MDHEGCQGQHPQQCCQWVSNAWSEFLDLLKNAETLD) are Lumenal-facing. The 182-residue stretch at 36–217 (DIVIMLLGYI…FTFYTAILSI (182 aa)) folds into the SSD domain. The helical transmembrane segment at 37–57 (IVIMLLGYIAMHLTFVSLFLS) threads the bilayer. At 58–64 (MRKMGSK) the chain is on the cytoplasmic side. Residues 65-85 (FWLGICTLFSSVFAFLFGLVV) form a helical membrane-spanning segment. The Lumenal portion of the chain corresponds to 86-90 (TTKLG). The chain crosses the membrane as a helical span at residues 91–111 (VPISVILLSEGLPFLVVTIGF). Residues 112–169 (EKNIVLTRAVMSHAIEHRRIQAQNSKSGKRSPDGSTQNMIQYAVQAAIKEKGFEIIRD) are Cytoplasmic-facing. The chain crosses the membrane as a helical span at residues 170-190 (YAIEIVILVIGAASGVQGGLQ). The Lumenal portion of the chain corresponds to 191 to 193 (QFC). Residues 194–214 (FLAAWTLFFDFILLFTFYTAI) traverse the membrane as a helical segment. At 215-272 (LSIKLRSTVSSVMSICVWPLRMMASRRVAENVAKGDDELNRVRGDAPLFGRKSSSIPK) the chain is on the cytoplasmic side. Residues 273–293 (FKVLMILGFIFVNIVNICSIP) traverse the membrane as a helical segment. Residues 294 to 401 (FRNPSSMSTI…GGILKSLEDP (108 aa)) are Lumenal-facing. The helical transmembrane segment at 402 to 422 (VLSKWIVIALALSVALNGYLF) threads the bilayer. At 423–976 (NVARWGIKDP…RYSEVKAIDE (554 aa)) the chain is on the cytoplasmic side. The active-site Charge relay system is Glu-618. Residue 624 to 630 (SASRGCK) participates in CoA binding. NADP(+)-binding positions include 685–687 (SRF) and 712–720 (DAMGMNMIS). The Charge relay system role is filled by Lys-752. 781–783 (VLK) lines the CoA pocket. The active-site Charge relay system is the Asp-828. Residue 923–924 (AH) participates in CoA binding. His-924 serves as the catalytic Proton donor. Residues 926 to 954 (QHNRSAAPSRSTTPGSSHDARLTGHDQCP) form a disordered region. Residue 928-929 (NR) coordinates NADP(+). The segment covering 928 to 941 (NRSAAPSRSTTPGS) has biased composition (polar residues). Over residues 943–953 (HDARLTGHDQC) the composition is skewed to basic and acidic residues.

This sequence belongs to the HMG-CoA reductase family.

The protein resides in the endoplasmic reticulum membrane. It carries out the reaction (R)-mevalonate + 2 NADP(+) + CoA = (3S)-3-hydroxy-3-methylglutaryl-CoA + 2 NADPH + 2 H(+). Its pathway is metabolic intermediate biosynthesis; (R)-mevalonate biosynthesis; (R)-mevalonate from acetyl-CoA: step 3/3. Functionally, HMG-CoA reductase; part of the first module of ergosterol biosynthesis pathway that includes the early steps of the pathway, conserved across all eukaryotes, and which results in the formation of mevalonate from acetyl-coenzyme A (acetyl-CoA). In this module, the cytosolic acetyl-CoA acetyltransferase catalyzes the formation of acetoacetyl-CoA. The hydroxymethylglutaryl-CoA synthase then condenses acetyl-CoA with acetoacetyl-CoA to form HMG-CoA. The rate-limiting step of the early module is the reduction to mevalonate by the 3-hydroxy-3-methylglutaryl-coenzyme A (HMG-CoA) reductase HMGR. The sequence is that of 3-hydroxy-3-methylglutaryl-coenzyme A reductase from Fusarium fujikuroi (Bakanae and foot rot disease fungus).